The primary structure comprises 205 residues: Large ribosomal subunit protein uL3 (205 aa).

This sequence belongs to the universal ribosomal protein uL3 family. In terms of assembly, part of the 50S ribosomal subunit. Forms a cluster with proteins L14 and L19.

In terms of biological role, one of the primary rRNA binding proteins, it binds directly near the 3'-end of the 23S rRNA, where it nucleates assembly of the 50S subunit. The sequence is that of Large ribosomal subunit protein uL3 from Thermosipho africanus (strain TCF52B).